The following is a 368-amino-acid chain: MSSATTMGQLPQHQTAIVAQGPGQMTIQKDAPVPALAHDMVLVKTATVAINPVDVKSLDYSPAPGAIIGFDFAGTIVALGSDAVKEGRLAVGDRVAGVVYGMDRLQPDVGAFAQYVGALADLVLKLPDHISLEDAAALGLATATAAYGLFKEMELPGALDRLSSSVPDRGDFVLVAGGSTATGTRAIELLKTAGFRPVATSSPSNFELVKKFGAEAVFDYHDPGCADAIKAYTNNELDYALDCIAEAETTQLCYAAIGRAGGRYVAVEPFRESIAQSRINTVKASWFNVMTVWGRKVELGGEYAREASLEDREFGARSFAAVQALLDRGYVTTHPIKLMSGGWEGVVEGVAKIRSQPPSGYKLVCQVA.

53–56 (VDVK) lines the NADP(+) pocket. 140-147 (LATATAAY) is a substrate binding site. NADP(+)-binding positions include 179–182 (STAT), 202–205 (SPSN), Tyr-220, and 267–268 (VE). 289–293 (VMTVW) lines the substrate pocket. 358–359 (PS) is a binding site for NADP(+).

It belongs to the zinc-containing alcohol dehydrogenase family. In terms of assembly, monomer.

The enzyme catalyses malate + 6 malonyl-CoA + acetyl-CoA + 2 AH2 + 2 S-adenosyl-L-methionine + 5 NADPH + 9 H(+) = trihazone A + 2 A + 2 S-adenosyl-L-homocysteine + 6 CO2 + 5 NADP(+) + 7 CoA + 6 H2O. Its pathway is secondary metabolite biosynthesis. Functionally, trans-enoyl reductase; part of the gene cluster that produces the tetronate natural products trihazones. The PKS-NRPS synthetase thnA with the help of the trans-enoyl reductase thnE are responsible for the synthesis of the carboxylmethyl containing trihazone A. The PKS portion of thnA synthesizes beta-keto-triene chain from one acetyl-CoA and 6 equivalents of malonyl-CoA, in collaboration with thnE, which selectively reduces the enoyl intermediate during the first and fourth iteration of the PKS. The NRPS domain selects and activates malate, of which the alpha-hydroxyl group attacks the completed polyketide acyl-S-ACP chain to form the ester product. Intramolecular Dieckmann cyclization catalyzed by the terminal reductase domain releases the product as trihazone A from the PKS-NPRS. The pathway begins with the formation of trihazone A by the hybrid PKS-NRPS synthetase thnA and the trans-enoyl reductase thnE. Trihazone A is further decarboxylated by the 2-oxoglutarate-dependent dioxygenase thnC to produce trihazone D. The function of the FAD-dependent monooxygenase thnD has still to be identified. The chain is Trans-enoyl reductase thnE from Trichoderma harzianum (Hypocrea lixii).